Consider the following 868-residue polypeptide: Cytosolic phospholipase A2 epsilon (868 aa).

The segment at Met1–Thr46 is disordered. A C2 domain is found at Thr46–Phe170. Residues Asp84, Asp90, Asp140, Asp142, and Asp148 each coordinate Ca(2+). One can recognise a PLA2c domain in the interval Pro324–Val856. Ser412 acts as the Nucleophile in catalysis. The active-site Proton acceptor is the Asp700. Residue Ser800 is modified to Phosphoserine. The tract at residues Glu857 to Ser868 is required for localization at membrane structures.

It depends on Ca(2+) as a cofactor.

It is found in the cytoplasm. The protein resides in the cytosol. The protein localises to the early endosome membrane. It localises to the lysosome membrane. Its subcellular location is the cell membrane. The catalysed reaction is a 1,2-diacyl-sn-glycero-3-phosphoethanolamine + a 1,2-diacyl-sn-glycero-3-phosphocholine = an N-acyl-1,2-diacyl-sn-glycero-3-phosphoethanolamine + a 2-acyl-sn-glycero-3-phosphocholine + H(+). The enzyme catalyses 1-hexadecanoyl-2-octadecanoyl-sn-glycero-3-phosphocholine + 1,2-di-(9Z-octadecenoyl)-sn-glycero-3-phosphoethanolamine = 2-octadecanoyl-sn-glycero-3-phosphocholine + N-hexadecanoyl-1,2-di-(9Z-octadecenoyl)-sn-glycero-3-phosphoethanolamine + H(+). It carries out the reaction 1-octadecanoyl-2-hexadecanoyl-sn-glycero-3-phosphocholine + 1,2-di-(9Z-octadecenoyl)-sn-glycero-3-phosphoethanolamine = N-octadecanoyl-1,2-di-(9Z-octadecenoyl)-sn-glycero-3-phosphoethanolamine + 2-hexadecanoyl-sn-glycero-3-phosphocholine + H(+). It catalyses the reaction 1,2-di-(9Z-octadecenoyl)-sn-glycero-3-phosphoethanolamine + 1,2-dihexadecanoyl-sn-glycero-3-phosphocholine = N-hexadecanoyl-1,2-di-(9Z-octadecenoyl)-sn-glycero-3-phosphoethanolamine + 2-hexadecanoyl-sn-glycero-3-phosphocholine + H(+). The catalysed reaction is 1,2-di-(5Z,8Z,11Z,14Z-eicosatetraenoyl)-sn-glycero-3-phosphocholine + 1,2-di-(9Z-octadecenoyl)-sn-glycero-3-phosphoethanolamine = N-(5Z,8Z,11Z,14Z-eicosatetraenoyl)-1,2-di-(9Z-octadecenoyl)-sn-glycero-3-phosphoethanolamine + 2-(5Z,8Z,11Z,14Z)-eicosatetraenoyl-sn-glycero-3-phosphocholine + H(+). The enzyme catalyses 2 1,2-di-(9Z-octadecenoyl)-sn-glycero-3-phosphoethanolamine = N,1,2-tri-(9Z-octadecenoyl)-sn-glycero-3-phosphoethanolamine + 2-(9Z-octadecenoyl)-sn-glycero-3-phosphoethanolamine + H(+). It carries out the reaction 1-(1Z-octadecenyl)-2-(9Z-octadecenoyl)-sn-glycero-3-phosphoethanolamine + 1,2-dihexadecanoyl-sn-glycero-3-phosphocholine = 1-O-(1Z-octadecenoyl)-2-(9Z-octadecenoyl)-sn-glycero-3-phospho-N-hexadecanoyl-ethanolamine + 2-hexadecanoyl-sn-glycero-3-phosphocholine + H(+). It catalyses the reaction a 1,2-diacyl-sn-glycero-3-phosphocholine + H2O = a 1-acyl-sn-glycero-3-phosphocholine + a fatty acid + H(+). The catalysed reaction is 1-hexadecanoyl-2-(5Z,8Z,11Z,14Z-eicosatetraenoyl)-sn-glycero-3-phosphocholine + H2O = 1-hexadecanoyl-sn-glycero-3-phosphocholine + (5Z,8Z,11Z,14Z)-eicosatetraenoate + H(+). The enzyme catalyses 1-hexadecanoyl-sn-glycero-3-phosphocholine + H2O = sn-glycerol 3-phosphocholine + hexadecanoate + H(+). Stimulated by cytosolic Ca(2+). Stimulated by anionic phospholipids such as phosphatidylserines, phosphatidates and phosphatidylinositols. In terms of biological role, calcium-dependent N-acyltransferase involved in the biosynthesis of N-acyl ethanolamines (NAEs) in the brain. Transfers the sn-1 fatty acyl chain of phosphatidylcholine (fatty acyl donor) to the amine group of phosphatidylethanolamine (fatty acyl acceptor) to generate N-acyl phosphatidylethanolamine (NAPE). Similarly can use plasmenylethanolamine as a fatty acyl acceptor to form N-acyl plasmenylethanolamine (N-Acyl-PlsEt). Both NAPE and N-Acyl-PlsEt can serve as precursors of bioactive NAEs like N-arachidonoyl phosphatidylethanolamine also called anandamide. Has weak phospholipase A2 and lysophospholipase activities. Regulates intracellular membrane trafficking that requires modulation of membrane curvature as it occurs by enrichment in lysophospholipids. Promotes tubule formation involved in clathrin-independent endocytotic trafficking and cargo recycling. The chain is Cytosolic phospholipase A2 epsilon from Homo sapiens (Human).